A 461-amino-acid polypeptide reads, in one-letter code: tRNA modification GTPase MnmE (461 aa).

Residues Arg23, Glu84, and Lys123 each coordinate (6S)-5-formyl-5,6,7,8-tetrahydrofolate. Residues 219-382 (GVQVVIGGRP…LLDHLTDTVA (164 aa)) enclose the TrmE-type G domain. GTP-binding positions include 229 to 234 (NAGKST), 248 to 254 (SETPGTT), 273 to 276 (DTAG), and 337 to 340 (NKAD). 2 residues coordinate Mg(2+): Ser233 and Thr254. Lys461 is a binding site for (6S)-5-formyl-5,6,7,8-tetrahydrofolate.

This sequence belongs to the TRAFAC class TrmE-Era-EngA-EngB-Septin-like GTPase superfamily. TrmE GTPase family. As to quaternary structure, homodimer. Heterotetramer of two MnmE and two MnmG subunits. The cofactor is K(+).

It localises to the cytoplasm. In terms of biological role, exhibits a very high intrinsic GTPase hydrolysis rate. Involved in the addition of a carboxymethylaminomethyl (cmnm) group at the wobble position (U34) of certain tRNAs, forming tRNA-cmnm(5)s(2)U34. In Salinibacter ruber (strain DSM 13855 / M31), this protein is tRNA modification GTPase MnmE.